A 63-amino-acid polypeptide reads, in one-letter code: Large ribosomal subunit protein bL35 (63 aa).

It belongs to the bacterial ribosomal protein bL35 family.

This chain is Large ribosomal subunit protein bL35, found in Campylobacter concisus (strain 13826).